The primary structure comprises 205 residues: Small ribosomal subunit protein uS4 (205 aa).

The interval 19–45 is disordered; sequence IWGRPKSPVNRREYGPGQHGQRRKGKL. In terms of domain architecture, S4 RNA-binding spans 94-157; sequence RRLDAVVYRA…KQLAFVLEAS (64 aa).

Part of the 30S ribosomal subunit. Contacts protein S5. The interaction surface between S4 and S5 is involved in control of translational fidelity. In terms of processing, may be methylated on an undetermined residue.

Its function is as follows. One of the primary rRNA binding proteins, it binds directly to 16S rRNA where it nucleates assembly of the body of the 30S subunit. In terms of biological role, with S5 and S12 plays an important role in translational accuracy. The polypeptide is Small ribosomal subunit protein uS4 (Rhodopseudomonas palustris (strain ATCC BAA-98 / CGA009)).